The chain runs to 543 residues: Sodium-dependent lysophosphatidylcholine symporter 1 (543 aa).

Residues 1-14 (MAKGEGAESGSAAG) show a composition bias toward low complexity. The segment at 1–34 (MAKGEGAESGSAAGLLPTSILQSTERPAQVKKEP) is disordered. The Cytoplasmic portion of the chain corresponds to 1–40 (MAKGEGAESGSAAGLLPTSILQSTERPAQVKKEPKKKKQQ). A helical membrane pass occupies residues 41–70 (LSVCNKLCYALGGAPYQVTGCALGFFLQIY). Topologically, residues 71–94 (LLDVAQKDEEVVFCFSSFQVGPFS) are extracellular. Residues 95–115 (ASIILFVGRAWDAITDPLVGL) form a helical membrane-spanning segment. The Cytoplasmic segment spans residues 116 to 127 (CISKSPWTCLGR). A helical transmembrane segment spans residues 128-147 (LMPWIIFSTPLAVIAYFLIW). The Extracellular segment spans residues 148-157 (FVPDFPHGQT). The helical transmembrane segment at 158-182 (YWYLLFYCLFETMVTCFHVPYSALT) threads the bilayer. Residues 183-189 (MFISTEQ) are Cytoplasmic-facing. Residues 190-221 (TERDSATAYRMTVEVLGTVLGTAIQGQIVGQA) traverse the membrane as a helical segment. The Extracellular portion of the chain corresponds to 222 to 241 (DTPCFQDLNSSTVASQSANH). A disulfide bridge links Cys225 with Cys473. N-linked (GlcNAc...) asparagine glycosylation is found at Asn230 and Asn240. A helical transmembrane segment spans residues 242-275 (THGTTSHRETQKAYLLAAGVIVCIYIICAVILIL). The Cytoplasmic segment spans residues 276–306 (GVREQREPYEAQQSEPIAYFRGLRLVMSHGP). Residues 307–333 (YIKLITGFLFTSLAFMLVEGNFVLFCT) form a helical membrane-spanning segment. At 334 to 344 (YTLGFRNEFQN) the chain is on the extracellular side. A helical membrane pass occupies residues 345 to 363 (LLLAIMLSATLTIPIWQWF). Over 364-367 (LTRF) the chain is Cytoplasmic. A helical transmembrane segment spans residues 368–389 (GKKTAVYVGISSAVPFLILVAL). The Extracellular segment spans residues 390-392 (MES). A helical membrane pass occupies residues 393-429 (NLIITYAVAVAAGISVAAAFLLPWSMLPDVIDDFHLK). The Cytoplasmic segment spans residues 430–439 (QPHFHGTEPI). The chain crosses the membrane as a helical span at residues 440–466 (FFSFYVFFTKFASGVSLGISTLSLDFA). At 467–478 (GYQTRGCSQPER) the chain is on the extracellular side. Residues 479–502 (VKFTLNMLVTMAPIVLILLGLLLF) form a helical membrane-spanning segment. Residues 503 to 543 (KMYPIDEERRRQNKKALQALRDEASSSGCSETDSTELASIL) lie on the Cytoplasmic side of the membrane.

It belongs to the major facilitator superfamily. In terms of assembly, interacts with ERVFRD-1/syncytin-2. In terms of tissue distribution, in placenta, associated with trophoblast cells.

The protein resides in the cell membrane. It is found in the endoplasmic reticulum membrane. It carries out the reaction a 1-acyl-sn-glycero-3-phosphocholine(in) + Na(+)(in) = a 1-acyl-sn-glycero-3-phosphocholine(out) + Na(+)(out). It catalyses the reaction 1-(4Z,7Z,10Z,13Z,16Z,19Z-docosahexaenoyl)-sn-glycero-3-phosphocholine(in) + Na(+)(in) = 1-(4Z,7Z,10Z,13Z,16Z,19Z-docosahexaenoyl)-sn-glycero-3-phosphocholine(out) + Na(+)(out). The catalysed reaction is 1-(9Z-octadecenoyl)-sn-glycero-3-phosphocholine(in) + Na(+)(in) = 1-(9Z-octadecenoyl)-sn-glycero-3-phosphocholine(out) + Na(+)(out). The enzyme catalyses 1-hexadecanoyl-sn-glycero-3-phosphocholine(in) + Na(+)(in) = 1-hexadecanoyl-sn-glycero-3-phosphocholine(out) + Na(+)(out). It carries out the reaction a 1-acyl-sn-glycero-3-phosphoethanolamine(in) + Na(+)(in) = a 1-acyl-sn-glycero-3-phosphoethanolamine(out) + Na(+)(out). Its function is as follows. Sodium-dependent lysophosphatidylcholine (LPC) symporter, which plays an essential role for blood-brain barrier formation and function. Specifically expressed in endothelium of the blood-brain barrier of micro-vessels and transports LPC into the brain. Transport of LPC is essential because it constitutes the major mechanism by which docosahexaenoic acid (DHA), an omega-3 fatty acid that is essential for normal brain growth and cognitive function, enters the brain. Transports LPC carrying long-chain fatty acids such LPC oleate and LPC palmitate with a minimum acyl chain length of 14 carbons. Does not transport docosahexaenoic acid in unesterified fatty acid. Specifically required for blood-brain barrier formation and function, probably by mediating lipid transport. Not required for central nervous system vascular morphogenesis. Acts as a transporter for tunicamycin, an inhibitor of asparagine-linked glycosylation. In placenta, acts as a receptor for ERVFRD-1/syncytin-2 and is required for trophoblast fusion. This chain is Sodium-dependent lysophosphatidylcholine symporter 1, found in Homo sapiens (Human).